A 407-amino-acid polypeptide reads, in one-letter code: Accessory Sec system protein translocase subunit SecY2 (407 aa).

Helical transmembrane passes span 13 to 33 (FLWT…TLPF), 65 to 85 (FFSI…MFTV), 104 to 124 (MLLT…NLPL), 133 to 153 (GTIV…LIWL), 158 to 178 (SSMG…SYIP), 192 to 212 (PLIL…AVLV), 248 to 268 (IMYA…LLFF), 287 to 307 (IPWF…FAFI), 345 to 365 (FAFV…LLIF), and 370 to 390 (YMRL…VFSI).

This sequence belongs to the SecY/SEC61-alpha family. SecY2 subfamily. As to quaternary structure, may form heterotrimers with SecE and SecG subunits (Potential). Component of the accessory SecA2/SecY2 protein translocase complex required to export cell wall protein GspB.

It is found in the cell membrane. Its function is as follows. The central subunit of a protein translocation channel (Potential). Part of the accessory SecA2/SecY2 system specifically required to export GspB, a serine-rich repeat cell wall protein encoded upstream in the same operon. This is Accessory Sec system protein translocase subunit SecY2 from Streptococcus gordonii.